The following is a 336-amino-acid chain: Tetraacyldisaccharide 4'-kinase (336 aa).

ATP is bound at residue 60–67 (TIGGTGKT).

Belongs to the LpxK family.

It catalyses the reaction a lipid A disaccharide + ATP = a lipid IVA + ADP + H(+). The protein operates within glycolipid biosynthesis; lipid IV(A) biosynthesis; lipid IV(A) from (3R)-3-hydroxytetradecanoyl-[acyl-carrier-protein] and UDP-N-acetyl-alpha-D-glucosamine: step 6/6. Functionally, transfers the gamma-phosphate of ATP to the 4'-position of a tetraacyldisaccharide 1-phosphate intermediate (termed DS-1-P) to form tetraacyldisaccharide 1,4'-bis-phosphate (lipid IVA). The chain is Tetraacyldisaccharide 4'-kinase from Pseudomonas putida (strain W619).